Consider the following 385-residue polypeptide: Putative transport protein MT1133 (385 aa).

A run of 8 helical transmembrane segments spans residues 7 to 27 (LTQK…GAYF), 32 to 52 (FVLI…FKWF), 66 to 86 (LLSA…LAIV), 159 to 179 (SLAG…ALLV), 218 to 238 (FVIA…AGFH), 241 to 261 (FFIF…GGIV), 263 to 283 (IPFG…FVLL), and 319 to 339 (GITM…ILIV).

Belongs to the autoinducer-2 exporter (AI-2E) (TC 2.A.86) family.

It is found in the cell membrane. This Mycobacterium tuberculosis (strain CDC 1551 / Oshkosh) protein is Putative transport protein MT1133.